The sequence spans 233 residues: Cell surface glycoprotein gp42 (233 aa).

Residues 1–16 (MLLWMVLLLCVSMTEA) form the signal peptide. 2 Ig-like domains span residues 23–98 (PVLS…GTIQ) and 115–195 (PVLT…RDIS). N-linked (GlcNAc...) asparagine glycosylation is found at asparagine 29, asparagine 66, and asparagine 181. Intrachain disulfides connect cysteine 40/cysteine 88 and cysteine 136/cysteine 184. Glycine 206 carries GPI-anchor amidated glycine lipidation. A propeptide spans 207–233 (TASMKSTTVVIWLPVSCLVGWPWLLRF) (removed in mature form).

In terms of tissue distribution, NK cells.

It is found in the cell membrane. The sequence is that of Cell surface glycoprotein gp42 from Rattus norvegicus (Rat).